The primary structure comprises 1323 residues: Nck-associated protein 5-like (1323 aa).

Disordered regions lie at residues 1–22 (MDQP…DSME), 113–142 (QIPL…TSLP), 156–175 (QQLR…ALDA), 204–238 (PATP…PWAP), 260–314 (PGEE…DTLL), and 341–714 (GATG…EQPE). Residues 1–135 (MDQPAGGTGK…PTSPAPNVSE (135 aa)) are mediates interaction with CDK5RAP2 and is required for homodimerization and microtubule bundle formation. Positions 22-109 (ELSTCQELLH…LQQKLQLTAN (88 aa)) form a coiled coil. Composition is skewed to pro residues over residues 162-172 (GPGPPATPPPA) and 226-236 (CGPPQPEPSPW). Over residues 271–298 (ASSRAPPSAQGPSSGPHCAPGSSSSSSS) the composition is skewed to low complexity. The span at 353–364 (PGKPNSPDPGPP) shows a compositional bias: pro residues. Phosphoserine; by CDK1 is present on residues Ser436, Ser447, Ser466, and Ser473. Residues 480-483 (SRIP) carry the (S/T)X(I/L)P motif 1 motif. Phosphoserine occurs at positions 489, 492, and 494. Over residues 531 to 542 (LRPSQSTVSTAL) the composition is skewed to polar residues. The residue at position 573 (Ser573) is a Phosphoserine; by CDK1. Residues 647-660 (RPGDPSHTPLRDRL) are compositionally biased toward basic and acidic residues. Thr654 carries the post-translational modification Phosphothreonine. Residues 743 to 1136 (RVYSSHSMGA…SGTPSKNLPK (394 aa)) are mediates interaction with beta-tubulin and is required for microtubule bundle formation. The residue at position 760 (Ser760) is a Phosphoserine; by CDK1. Disordered regions lie at residues 778–875 (ALCP…HSAI), 892–948 (GQER…EVKT), 979–1003 (AYLS…GQAQ), and 1027–1323 (KELP…GSQG). Over residues 799–817 (KPKSPHSSPTKLPSKSPTK) the composition is skewed to low complexity. A (S/T)X(I/L)P motif 2 motif is present at residues 808 to 811 (TKLP). Positions 918–921 (SKLP) match the (S/T)X(I/L)P motif 3; required for interaction with MAPRE1 motif. The span at 925–934 (RRTEATKNKD) shows a compositional bias: basic and acidic residues. Positions 942 to 985 (LRKEVKTEARKLEAESLNISKLMAKAEDLRRALEEEKAYLSRAR) form a coiled coil. A compositionally biased stretch (basic and acidic residues) spans 1027–1041 (KELPPKSWREPKPEY). Composition is skewed to polar residues over residues 1097–1112 (VSTT…TRTL) and 1124–1136 (HSSS…NLPK). Positions 1143-1153 (DPPPGAPPARP) are enriched in pro residues. A Phosphoserine modification is found at Ser1184. Composition is skewed to polar residues over residues 1225 to 1237 (TFPN…SSSD) and 1264 to 1273 (VDPSRTSTPQ). Over residues 1302 to 1323 (LETSESLSDSLYDSLSSCGSQG) the composition is skewed to low complexity.

In terms of assembly, homodimer. Interacts with CDK5RAP2. Interacts with MAPRE1. Interacts with beta-tubulin. Post-translationally, CDK1/Cyclin B-dependent phosphorylation mediates its dissociation from centrosomes during mitosis.

Its subcellular location is the cytoplasm. The protein localises to the cytoskeleton. It localises to the microtubule organizing center. The protein resides in the centrosome. Regulates microtubule organization and stabilization. Promotes microtubule growth and bundling formation and stabilizes microtubules by increasing intense acetylation of microtubules. Both tubulin-binding and homodimer formation are required for NCKAP5L-mediated microtubule bundle formation. In Mus musculus (Mouse), this protein is Nck-associated protein 5-like (Nckap5l).